A 326-amino-acid polypeptide reads, in one-letter code: Target of rapamycin complex subunit LST8 (326 aa).

An N-acetylmethionine modification is found at M1. 5 WD repeats span residues 1-37 (MNTT…CTRT), 40-80 (HQDS…PIIS), 83-122 (GVSK…LQCQ), 126-165 (QVNA…NEQL), and 168-207 (EPEF…GDEV). T51 is subject to Phosphothreonine. K86 is covalently cross-linked (Glycyl lysine isopeptide (Lys-Gly) (interchain with G-Cter in SUMO3)). Residues K215, K245, and K261 each participate in a glycyl lysine isopeptide (Lys-Gly) (interchain with G-Cter in SUMO3) cross-link. The stretch at 218–257 (AHTRYALQCRFSPDSTLLATCSADQTCKIWRTSNFSLMTE) is one WD 6 repeat. The WD 7 repeat unit spans residues 268–309 (SSRGWMWGCAFSGDSQYIVTASSDNLARLWCVETGEIKREYG). A Glycyl lysine isopeptide (Lys-Gly) (interchain with G-Cter in SUMO3); alternate cross-link involves residue K305. Glycyl lysine isopeptide (Lys-Gly) (interchain with G-Cter in ubiquitin); alternate cross-links involve residues K305 and K313. K313 participates in a covalent cross-link: Glycyl lysine isopeptide (Lys-Gly) (interchain with G-Cter in SUMO1); alternate.

It belongs to the WD repeat LST8 family. In terms of assembly, part of the mechanistic target of rapamycin complex 1 (mTORC1) which contains MTOR, MLST8 and RPTOR. mTORC1 associates with AKT1S1/PRAS40, which inhibits its activity. mTORC1 binds to and is inhibited by FKBP12-rapamycin. Within mTORC1, interacts directly with MTOR and RPTOR. Component of the mechanistic target of rapamycin complex 2 (mTORC2), consisting in two heterotretramers composed of MTOR, MLST8, RICTOR and MAPKAP1/SIN1. Contrary to mTORC1, mTORC2 does not bind to and is not sensitive to FKBP12-rapamycin. mTORC1 and mTORC2 associate with DEPTOR, which regulates their activity. Interacts with RHEB. Interacts with MEAK7. Interacts with SIK3. Interacts with SLC38A7; this interaction promotes the recruitment of mTORC1 to the lysosome and its subsequent activation. Post-translationally, phosphorylation at Thr-51 by CDK1 promotes ubiquitination by the SCF(FBXW7) complex, followed by degradation. Ubiquitination by the SCF(FBXW7) and SCF(FBXW11) complexes following phosphorylation at Thr-51 by CDK1, leads to its degradation by the proteasome. Ubiquitination at Lys-305 and Lys-313 by TRAF2 via 'Lys-63'-linked polyubiquitin chains inhibits formation of the mTORC2 complex, while promoting formation of the mTORC1 complex: ubiquitination disrupts the interaction between MLST8 and MAPKAP1/SIN1 to favor mTORC1 assembly. Deubiquitination at Lys-305 and Lys-313 by OTUD7B promotes MLST8 interaction with MAPKAP1/SIN1, facilitating mTORC2 assembly. In terms of processing, sumoylation with SUMO1, SUMO2 and SUMO3 promotes assembly of both mTORC1 and mTORC2 complexes. As to expression, expressed at highest levels in the brain and testis, followed by lung, heart, kidney, skeletal muscle, spleen and liver. Also expressed in epididymal, abdominal and brown fat, small intestine and pancreas.

It is found in the lysosome membrane. It localises to the cytoplasm. Its function is as follows. Subunit of both mTORC1 and mTORC2, which regulates cell growth and survival in response to nutrient and hormonal signals. mTORC1 is activated in response to growth factors or amino acids. In response to nutrients, mTORC1 is recruited to the lysosome membrane and promotes protein, lipid and nucleotide synthesis by phosphorylating several substrates, such as ribosomal protein S6 kinase (RPS6KB1 and RPS6KB2) and EIF4EBP1 (4E-BP1). In the same time, it inhibits catabolic pathways by phosphorylating the autophagy initiation components ULK1 and ATG13, as well as transcription factor TFEB, a master regulators of lysosomal biogenesis and autophagy. The mTORC1 complex is inhibited in response to starvation and amino acid depletion. Within mTORC1, MLST8 interacts directly with MTOR and enhances its kinase activity. In nutrient-poor conditions, stabilizes the MTOR-RPTOR interaction and favors RPTOR-mediated inhibition of MTOR activity. As part of the mTORC2 complex, transduces signals from growth factors to pathways involved in proliferation, cytoskeletal organization, lipogenesis and anabolic output. mTORC2 is also activated by growth factors, but seems to be nutrient-insensitive. In response to growth factors, mTORC2 phosphorylates and activates AGC protein kinase family members, including AKT (AKT1, AKT2 and AKT3), PKC (PRKCA, PRKCB and PRKCE) and SGK1. mTORC2 functions upstream of Rho GTPases to regulate the actin cytoskeleton, probably by activating one or more Rho-type guanine nucleotide exchange factors. mTORC2 promotes the serum-induced formation of stress-fibers or F-actin. mTORC2 plays a critical role in AKT1 activation by mediating phosphorylation of different sites depending on the context, such as 'Thr-450', 'Ser-473', 'Ser-477' or 'Thr-479', facilitating the phosphorylation of the activation loop of AKT1 on 'Thr-308' by PDPK1/PDK1 which is a prerequisite for full activation. mTORC2 regulates the phosphorylation of SGK1 at 'Ser-422'. mTORC2 also modulates the phosphorylation of PRKCA on 'Ser-657'. Within mTORC2, MLST8 acts as a bridge between MAPKAP1/SIN1 and MTOR. The protein is Target of rapamycin complex subunit LST8 of Rattus norvegicus (Rat).